Consider the following 307-residue polypeptide: Putative lipid kinase SE_0507 (307 aa).

The DAGKc domain maps to 3 to 139 (QPYNHGVLFY…YDVLKVNDLY (137 aa)). Residues serine 44, 74 to 80 (GDGTLNE), and threonine 101 contribute to the ATP site. Mg(2+)-binding residues include serine 220, aspartate 223, and arginine 225. The active-site Proton acceptor is the glutamate 281.

Belongs to the diacylglycerol/lipid kinase family. Mg(2+) serves as cofactor.

May catalyze the ATP-dependent phosphorylation of lipids other than diacylglycerol (DAG). This is Putative lipid kinase SE_0507 from Staphylococcus epidermidis (strain ATCC 12228 / FDA PCI 1200).